The chain runs to 137 residues: Nucleoside diphosphate kinase (137 aa).

Residues lysine 11, phenylalanine 59, arginine 87, threonine 93, arginine 104, and asparagine 114 each coordinate ATP. The Pros-phosphohistidine intermediate role is filled by histidine 117.

Belongs to the NDK family. In terms of assembly, homotetramer. The cofactor is Mg(2+).

Its subcellular location is the cytoplasm. The enzyme catalyses a 2'-deoxyribonucleoside 5'-diphosphate + ATP = a 2'-deoxyribonucleoside 5'-triphosphate + ADP. It catalyses the reaction a ribonucleoside 5'-diphosphate + ATP = a ribonucleoside 5'-triphosphate + ADP. In terms of biological role, major role in the synthesis of nucleoside triphosphates other than ATP. The ATP gamma phosphate is transferred to the NDP beta phosphate via a ping-pong mechanism, using a phosphorylated active-site intermediate. The polypeptide is Nucleoside diphosphate kinase (Frankia alni (strain DSM 45986 / CECT 9034 / ACN14a)).